Here is a 171-residue protein sequence, read N- to C-terminus: Large ribosomal subunit protein bL17 (171 aa).

Positions 140 to 152 (KREIQTKAREEKR) are enriched in basic and acidic residues. Residues 140–171 (KREIQTKAREEKRATRKSNSAPVNKETTSKKK) form a disordered region. Positions 156–165 (KSNSAPVNKE) are enriched in polar residues.

The protein belongs to the bacterial ribosomal protein bL17 family. Part of the 50S ribosomal subunit. Contacts protein L32.

This chain is Large ribosomal subunit protein bL17, found in Leptospira interrogans serogroup Icterohaemorrhagiae serovar Lai (strain 56601).